The primary structure comprises 331 residues: UPF0194 membrane protein YbhG (331 aa).

An N-terminal signal peptide occupies residues M1–A15. Residues E107–A208 adopt a coiled-coil conformation.

It belongs to the UPF0194 family.

Its subcellular location is the periplasm. The protein is UPF0194 membrane protein YbhG of Escherichia coli O139:H28 (strain E24377A / ETEC).